Reading from the N-terminus, the 176-residue chain is RNA pyrophosphohydrolase (176 aa).

A Nudix hydrolase domain is found at 6–149 (GYRPNVGIVI…KRDVYRRVMK (144 aa)). The short motif at 38 to 59 (GGINPGESAEQAMYRELFEEVG) is the Nudix box element.

It belongs to the Nudix hydrolase family. RppH subfamily. Requires a divalent metal cation as cofactor.

Its function is as follows. Accelerates the degradation of transcripts by removing pyrophosphate from the 5'-end of triphosphorylated RNA, leading to a more labile monophosphorylated state that can stimulate subsequent ribonuclease cleavage. In Salmonella paratyphi C (strain RKS4594), this protein is RNA pyrophosphohydrolase.